A 240-amino-acid polypeptide reads, in one-letter code: Ribitol-5-phosphate cytidylyltransferase (240 aa).

Residues 8 to 11 (FAGG) and 81 to 87 (GETGQMS) contribute to the CTP site.

The protein belongs to the IspD/TarI cytidylyltransferase family. TarI subfamily.

The catalysed reaction is D-ribitol 5-phosphate + CTP + H(+) = CDP-L-ribitol + diphosphate. Its pathway is cell wall biogenesis; poly(ribitol phosphate) teichoic acid biosynthesis. Catalyzes the transfer of the cytidylyl group of CTP to D-ribitol 5-phosphate. This is Ribitol-5-phosphate cytidylyltransferase from Streptococcus agalactiae serotype V (strain ATCC BAA-611 / 2603 V/R).